Here is a 1167-residue protein sequence, read N- to C-terminus: DNA-directed RNA polymerase subunit beta (1167 aa).

The protein belongs to the RNA polymerase beta chain family. The RNAP catalytic core consists of 2 alpha, 1 beta, 1 beta' and 1 omega subunit. When a sigma factor is associated with the core the holoenzyme is formed, which can initiate transcription.

The enzyme catalyses RNA(n) + a ribonucleoside 5'-triphosphate = RNA(n+1) + diphosphate. DNA-dependent RNA polymerase catalyzes the transcription of DNA into RNA using the four ribonucleoside triphosphates as substrates. The protein is DNA-directed RNA polymerase subunit beta of Mycolicibacterium vanbaalenii (strain DSM 7251 / JCM 13017 / BCRC 16820 / KCTC 9966 / NRRL B-24157 / PYR-1) (Mycobacterium vanbaalenii).